We begin with the raw amino-acid sequence, 598 residues long: MRLSQMLFVTLREDPAEAEIPSHKLLLRAGYIRRIGSGIYAYLPLMWRVLQKVSQIVREEMNAAGAQECLLPQLQPAELWRESGRWETYTKAEGIMFSLIDRRDTELGLGPTHEEVITTIAKEMIRSYRQLPVNLYQIQSKFRDEIRPRFGLMRGREFIMKDAYSFHASEDSLKETYQAMDQAYRNMITRCGLEFRAVQADSGAIGGSASQEFMILAEAGEDEVLYTEDGKYAANVEKAVSLPPDAELSPFTTPEKRETPNTNTIEKLCQFLQCSATAIVKNVLYQAVYDNGKTVLVLVSIRGDQDVNDVKLTNELVRLAPQYQATTLLALQVPDETAQAKWAAKPLPLGYIAPNLEDNYISSIPDITPKFLRLVDKTAVELKNFITGANESGYHQVGANWGQEFVLPSLVVDVRKAMAGDRAVHDPIQTLQTARGIEVGHIFQLGVKYSQAMGATFTNEQGEEKPLIMGCYGVGVSRLAQAAVEQSYDKDGIIWPVAIAPYHAVVVIPNINDAQQVEVAEKLYTELNKVGVETLLDDRDERAGVKFKDAELIGIPYRIVTGRSLQSGKVELVERSTKNSQEIAIDQVVETLKKLINV.

The protein belongs to the class-II aminoacyl-tRNA synthetase family. ProS type 1 subfamily. As to quaternary structure, homodimer.

Its subcellular location is the cytoplasm. The enzyme catalyses tRNA(Pro) + L-proline + ATP = L-prolyl-tRNA(Pro) + AMP + diphosphate. Functionally, catalyzes the attachment of proline to tRNA(Pro) in a two-step reaction: proline is first activated by ATP to form Pro-AMP and then transferred to the acceptor end of tRNA(Pro). As ProRS can inadvertently accommodate and process non-cognate amino acids such as alanine and cysteine, to avoid such errors it has two additional distinct editing activities against alanine. One activity is designated as 'pretransfer' editing and involves the tRNA(Pro)-independent hydrolysis of activated Ala-AMP. The other activity is designated 'posttransfer' editing and involves deacylation of mischarged Ala-tRNA(Pro). The misacylated Cys-tRNA(Pro) is not edited by ProRS. The polypeptide is Proline--tRNA ligase (Rippkaea orientalis (strain PCC 8801 / RF-1) (Cyanothece sp. (strain PCC 8801))).